Consider the following 149-residue polypeptide: Myoglobin (149 aa).

At A2 the chain carries N-acetylalanine. The Globin domain maps to 2–143 (ADWDKVNSVW…ICSDIEKEYK (142 aa)). H89 contributes to the heme b binding site.

The protein belongs to the globin family. Monomeric.

Its subcellular location is the cytoplasm. The protein localises to the sarcoplasm. The catalysed reaction is Fe(III)-heme b-[protein] + nitric oxide + H2O = Fe(II)-heme b-[protein] + nitrite + 2 H(+). It catalyses the reaction H2O2 + AH2 = A + 2 H2O. Monomeric heme protein which primary function is to store oxygen and facilitate its diffusion within muscle tissues. Reversibly binds oxygen through a pentacoordinated heme iron and enables its timely and efficient release as needed during periods of heightened demand. Depending on the oxidative conditions of tissues and cells, and in addition to its ability to bind oxygen, it also has a nitrite reductase activity whereby it regulates the production of bioactive nitric oxide. Under stress conditions, like hypoxia and anoxia, it also protects cells against reactive oxygen species thanks to its pseudoperoxidase activity. In Galeorhinus galeus (Tope shark), this protein is Myoglobin (mb).